Reading from the N-terminus, the 261-residue chain is Pyridoxine-5'-phosphate oxidase (261 aa).

42-45 provides a ligand contact to pyridoxal 5'-phosphate; the sequence is RGDP. Residue 95–98 participates in FMN binding; that stretch reads RMVL. Position 100 (Lys100) interacts with pyridoxal 5'-phosphate. FMN is bound by residues 110–111, 116–117, and Gln139; these read FT and RK. Residues Tyr157, Arg161, and Ser165 each coordinate pyridoxal 5'-phosphate. Residues 174 to 175 and Trp219 each bind FMN; that span reads QS. A pyridoxal 5'-phosphate-binding site is contributed by 225 to 227; it reads RLH. Arg229 lines the FMN pocket. The residue at position 238 (Thr238) is a Phosphothreonine. Ser241 is modified (phosphoserine).

The protein belongs to the pyridoxamine 5'-phosphate oxidase family. Homodimer. FMN is required as a cofactor.

It catalyses the reaction pyridoxamine 5'-phosphate + O2 + H2O = pyridoxal 5'-phosphate + H2O2 + NH4(+). The enzyme catalyses pyridoxine 5'-phosphate + O2 = pyridoxal 5'-phosphate + H2O2. The protein operates within cofactor metabolism; pyridoxal 5'-phosphate salvage; pyridoxal 5'-phosphate from pyridoxamine 5'-phosphate: step 1/1. It functions in the pathway cofactor metabolism; pyridoxal 5'-phosphate salvage; pyridoxal 5'-phosphate from pyridoxine 5'-phosphate: step 1/1. Functionally, catalyzes the oxidation of either pyridoxine 5'-phosphate (PNP) or pyridoxamine 5'-phosphate (PMP) into pyridoxal 5'-phosphate (PLP). The polypeptide is Pyridoxine-5'-phosphate oxidase (PNPO) (Bos taurus (Bovine)).